An 81-amino-acid polypeptide reads, in one-letter code: ATP synthase subunit c, chloroplastic (81 aa).

2 helical membrane passes run 3–23 and 57–77; these read PLIAAASVIAAGLAVGLASIG and LAFMEALTIYGLVVALALLFA.

This sequence belongs to the ATPase C chain family. In terms of assembly, F-type ATPases have 2 components, F(1) - the catalytic core - and F(0) - the membrane proton channel. F(1) has five subunits: alpha(3), beta(3), gamma(1), delta(1), epsilon(1). F(0) has four main subunits: a(1), b(1), b'(1) and c(10-14). The alpha and beta chains form an alternating ring which encloses part of the gamma chain. F(1) is attached to F(0) by a central stalk formed by the gamma and epsilon chains, while a peripheral stalk is formed by the delta, b and b' chains.

The protein localises to the plastid. It is found in the chloroplast thylakoid membrane. Functionally, f(1)F(0) ATP synthase produces ATP from ADP in the presence of a proton or sodium gradient. F-type ATPases consist of two structural domains, F(1) containing the extramembraneous catalytic core and F(0) containing the membrane proton channel, linked together by a central stalk and a peripheral stalk. During catalysis, ATP synthesis in the catalytic domain of F(1) is coupled via a rotary mechanism of the central stalk subunits to proton translocation. Its function is as follows. Key component of the F(0) channel; it plays a direct role in translocation across the membrane. A homomeric c-ring of between 10-14 subunits forms the central stalk rotor element with the F(1) delta and epsilon subunits. The chain is ATP synthase subunit c, chloroplastic from Pisum sativum (Garden pea).